The primary structure comprises 25 residues: Unknown protein 4 (25 aa).

Residues 1–10 (IEHNAEEIRK) show a composition bias toward basic and acidic residues. A disordered region spans residues 1 to 25 (IEHNAEEIRKTAIRTAVQNTAQQTK). The span at 16-25 (AVQNTAQQTK) shows a compositional bias: polar residues.

This chain is Unknown protein 4, found in Lonomia obliqua (Moth).